We begin with the raw amino-acid sequence, 320 residues long: Malate dehydrogenase (320 aa).

Residues 10–15 (GAGNIG) and aspartate 34 each bind NAD(+). Residues arginine 83 and arginine 89 each coordinate substrate. NAD(+) is bound by residues asparagine 96 and 119-121 (ITN). Substrate-binding residues include asparagine 121 and arginine 152. The active-site Proton acceptor is histidine 176.

It belongs to the LDH/MDH superfamily. MDH type 3 family.

It catalyses the reaction (S)-malate + NAD(+) = oxaloacetate + NADH + H(+). Catalyzes the reversible oxidation of malate to oxaloacetate. This Novosphingobium aromaticivorans (strain ATCC 700278 / DSM 12444 / CCUG 56034 / CIP 105152 / NBRC 16084 / F199) protein is Malate dehydrogenase.